The chain runs to 445 residues: Phosphoglucosamine mutase (445 aa).

The active-site Phosphoserine intermediate is the S102. S102, D241, D243, and D245 together coordinate Mg(2+). S102 is modified (phosphoserine).

This sequence belongs to the phosphohexose mutase family. The cofactor is Mg(2+). Activated by phosphorylation.

The enzyme catalyses alpha-D-glucosamine 1-phosphate = D-glucosamine 6-phosphate. Functionally, catalyzes the conversion of glucosamine-6-phosphate to glucosamine-1-phosphate. This is Phosphoglucosamine mutase from Rhodococcus jostii (strain RHA1).